A 253-amino-acid polypeptide reads, in one-letter code: 1-(5-phosphoribosyl)-5-[(5-phosphoribosylamino)methylideneamino] imidazole-4-carboxamide isomerase (253 aa).

Catalysis depends on aspartate 8, which acts as the Proton acceptor. Aspartate 131 functions as the Proton donor in the catalytic mechanism.

This sequence belongs to the HisA/HisF family.

The protein resides in the cytoplasm. The catalysed reaction is 1-(5-phospho-beta-D-ribosyl)-5-[(5-phospho-beta-D-ribosylamino)methylideneamino]imidazole-4-carboxamide = 5-[(5-phospho-1-deoxy-D-ribulos-1-ylimino)methylamino]-1-(5-phospho-beta-D-ribosyl)imidazole-4-carboxamide. The protein operates within amino-acid biosynthesis; L-histidine biosynthesis; L-histidine from 5-phospho-alpha-D-ribose 1-diphosphate: step 4/9. This chain is 1-(5-phosphoribosyl)-5-[(5-phosphoribosylamino)methylideneamino] imidazole-4-carboxamide isomerase, found in Polynucleobacter asymbioticus (strain DSM 18221 / CIP 109841 / QLW-P1DMWA-1) (Polynucleobacter necessarius subsp. asymbioticus).